The primary structure comprises 70 residues: Basic phospholipase A2 2 (70 aa).

C28 and C44 are oxidised to a cystine. H47 is a catalytic residue. D48 provides a ligand contact to Ca(2+).

This sequence belongs to the phospholipase A2 family. Group II subfamily. D49 sub-subfamily. It depends on Ca(2+) as a cofactor. In terms of tissue distribution, expressed by the venom gland.

It is found in the secreted. The enzyme catalyses a 1,2-diacyl-sn-glycero-3-phosphocholine + H2O = a 1-acyl-sn-glycero-3-phosphocholine + a fatty acid + H(+). In terms of biological role, snake venom phospholipase A2 (PLA2) that exhibits strong myotoxicity. PLA2 catalyzes the calcium-dependent hydrolysis of the 2-acyl groups in 3-sn-phosphoglycerides. This is Basic phospholipase A2 2 from Trimeresurus stejnegeri (Chinese green tree viper).